A 365-amino-acid chain; its full sequence is Undecaprenyl-phosphate alpha-N-acetylglucosaminyl 1-phosphate transferase (365 aa).

10 helical membrane-spanning segments follow: residues 3–23 (LLTMSTELIYIFLFSMAFLFV), 45–65 (GLIPLVGGISVFAGVCFAFLI), 99–119 (IRAFVQALVGIAMMAVAGLYL), 132–152 (VLGPFGYVVTLFAVWAAINAF), 157–177 (GIDGLLGGLSCVSFGAMGILL), 187–207 (LWCFAMIATIIPYILLNLGLL), 213–233 (VFMGDAGSTLIGFTAIWILLQ), 242–262 (INPVTALWIIAIPLMDMIAIM), 293–313 (QAFVLITLAAALLAMIGVIGE), and 315–335 (LTFIPEWVMLALFLLAFLLYG).

It belongs to the glycosyltransferase 4 family. WecA subfamily. Mg(2+) serves as cofactor. Mn(2+) is required as a cofactor.

The protein resides in the cell inner membrane. It catalyses the reaction di-trans,octa-cis-undecaprenyl phosphate + UDP-N-acetyl-alpha-D-glucosamine = N-acetyl-alpha-D-glucosaminyl-di-trans,octa-cis-undecaprenyl diphosphate + UMP. It functions in the pathway bacterial outer membrane biogenesis; LPS O-antigen biosynthesis. Its pathway is bacterial outer membrane biogenesis; enterobacterial common antigen biosynthesis. Functionally, catalyzes the transfer of the GlcNAc-1-phosphate moiety from UDP-GlcNAc onto the carrier lipid undecaprenyl phosphate (C55-P), yielding GlcNAc-pyrophosphoryl-undecaprenyl (GlcNAc-PP-C55). This is Undecaprenyl-phosphate alpha-N-acetylglucosaminyl 1-phosphate transferase from Yersinia pestis.